We begin with the raw amino-acid sequence, 112 residues long: CLAVATA3/ESR (CLE)-related protein 44 (112 aa).

Residues 1–39 (MATTIDQTSIKSLHFHQVIRLIITIIFLAFLFLIGPTSS) form the signal peptide. The interval 41 to 112 (NHHLHESSSK…VPSGPNPISN (72 aa)) is disordered. A compositionally biased stretch (polar residues) spans 62 to 71 (QPSTPSSSTM). P104 and P107 each carry hydroxyproline. P107 is a glycosylation site (O-linked (Ara...) hydroxyproline).

It belongs to the CLV3/ESR signal peptide family. As to quaternary structure, interacts specifically with the leucine-rich repeat receptor-like protein kinase TDR, especially in the presence of SERK2. The O-glycosylation (arabinosylation) of the hydroxyproline Pro-107 enhances binding affinity of the CLE44p peptide for its receptor. Mostly expressed in flowers and leaves. Widely expressed along the vascular strands. In roots and hypocotyls, present in endodermal cells as well as cells in the phloem and the adjacent pericycle.

It is found in the secreted. The protein localises to the extracellular space. Extracellular signal peptide that regulates cell fate. May act with TDR as a ligand-receptor pair in a signal transduction pathway that represses tracheary element differentiation but promotes the formation of procambial cells adjacent to phloem cells in the veins. Regulates the transition of protophloem cells from proliferation to differentiation, thus impinging on postembryonic growth capacity of the root meristem; this signaling pathway requires CRN and CLV2. The polypeptide is CLAVATA3/ESR (CLE)-related protein 44 (Arabidopsis thaliana (Mouse-ear cress)).